The primary structure comprises 262 residues: Phosphate import ATP-binding protein PstB (262 aa).

The region spanning 16–257 is the ABC transporter domain; sequence MEARHLSVRY…PSEQRTEDYV (242 aa). 48–55 lines the ATP pocket; it reads GPSGCGKS.

Belongs to the ABC transporter superfamily. Phosphate importer (TC 3.A.1.7) family. As to quaternary structure, the complex is composed of two ATP-binding proteins (PstB), two transmembrane proteins (PstC and PstA) and a solute-binding protein (PstS).

The protein resides in the cell inner membrane. It catalyses the reaction phosphate(out) + ATP + H2O = ADP + 2 phosphate(in) + H(+). Part of the ABC transporter complex PstSACB involved in phosphate import. Responsible for energy coupling to the transport system. The protein is Phosphate import ATP-binding protein PstB of Anaeromyxobacter dehalogenans (strain 2CP-C).